The following is a 140-amino-acid chain: Extracellular globin-1 (140 aa).

The Globin domain maps to 1–140; that stretch reads ECDVLERFKV…YDFIASGIKP (140 aa). An intrachain disulfide couples Cys2 to Cys130. His93 serves as a coordination point for heme b.

The protein belongs to the globin family. In terms of assembly, the giant hemoglobins of worms are formed of a monomeric subunit and a disulfide-bonded trimer. This subunit is monomeric.

The protein resides in the secreted. The protein is Extracellular globin-1 of Metaphire hilgendorfi (Earthworm).